Reading from the N-terminus, the 95-residue chain is Co-chaperonin GroES (95 aa).

The protein belongs to the GroES chaperonin family. Heptamer of 7 subunits arranged in a ring. Interacts with the chaperonin GroEL.

The protein localises to the cytoplasm. Together with the chaperonin GroEL, plays an essential role in assisting protein folding. The GroEL-GroES system forms a nano-cage that allows encapsulation of the non-native substrate proteins and provides a physical environment optimized to promote and accelerate protein folding. GroES binds to the apical surface of the GroEL ring, thereby capping the opening of the GroEL channel. The polypeptide is Co-chaperonin GroES (Ruthia magnifica subsp. Calyptogena magnifica).